Reading from the N-terminus, the 712-residue chain is Auxin response factor 15 (712 aa).

Residues 142 to 244 constitute a DNA-binding region (TF-B3); sequence FCKTLTASDT…ELRLGVRRAA (103 aa).

Belongs to the ARF family. Homo and heterodimers. Expressed in roots, culms, leaves and young panicles.

The protein localises to the nucleus. Auxin response factors (ARFs) are transcriptional factors that bind specifically to the DNA sequence 5'-TGTCTC-3' found in the auxin-responsive promoter elements (AuxREs). This is Auxin response factor 15 (ARF15) from Oryza sativa subsp. japonica (Rice).